A 326-amino-acid polypeptide reads, in one-letter code: Transcription initiation factor IIB (326 aa).

The segment at 26 to 57 (DVEVCPECGSPRLIRDYRRGEFICQDCGLVIE) adopts a TFIIB-type zinc-finger fold. 4 residues coordinate Zn(2+): Cys-30, Cys-33, Cys-49, and Cys-52. A run of 2 repeats spans residues 143 to 226 (SELD…TREL) and 237 to 318 (DYIP…ELAE).

The protein belongs to the TFIIB family.

Stabilizes TBP binding to an archaeal box-A promoter. Also responsible for recruiting RNA polymerase II to the pre-initiation complex (DNA-TBP-TFIIB). The polypeptide is Transcription initiation factor IIB (Archaeoglobus fulgidus (strain ATCC 49558 / DSM 4304 / JCM 9628 / NBRC 100126 / VC-16)).